Consider the following 593-residue polypeptide: SPI-1 type 3 secretion system translocon protein SctE (593 aa).

Coiled-coil stretches lie at residues 151–208 (DTAK…ATDA) and 287–314 (EGRQAEMEKKSAEFQEETRKAEETNRIM). 2 helical membrane passes run 330-350 (VVAAVFTGGASLALAAVGLAV) and 409-429 (IVGAIVAAIAMVAVIVVVAVV).

The protein belongs to the SctE/SipB/YopB family. The core secretion machinery of the T3SS is composed of approximately 20 different proteins, including cytoplasmic components, a base, an export apparatus and a needle. This subunit is involved in the formation of a pore, called the translocon, in host membrane.

The protein resides in the secreted. Its subcellular location is the host membrane. It is found in the host cell. In terms of biological role, component of the type III secretion system 1 (SPI-1 T3SS), also called injectisome, which is used to inject bacterial effector proteins into eukaryotic host cells. SipB/SctE1 and SipC/SctB are inserted into the host membrane where they form a pore and allow the translocation of effector proteins into the cytosol of target cells. Induces macrophage apoptosis either by binding and activating the proapoptotic enzyme caspase-1 (caspase-1 dependent), resulting in the release of interleukin-1 beta active form, or by disrupting mitochondria and inducing autophagy (caspase-1 independent). The former is dependent of its membrane-fusion activity. This Salmonella typhi protein is SPI-1 type 3 secretion system translocon protein SctE.